A 314-amino-acid polypeptide reads, in one-letter code: Methionyl-tRNA formyltransferase (314 aa).

S113–P116 is a (6S)-5,6,7,8-tetrahydrofolate binding site.

The protein belongs to the Fmt family.

The catalysed reaction is L-methionyl-tRNA(fMet) + (6R)-10-formyltetrahydrofolate = N-formyl-L-methionyl-tRNA(fMet) + (6S)-5,6,7,8-tetrahydrofolate + H(+). Functionally, attaches a formyl group to the free amino group of methionyl-tRNA(fMet). The formyl group appears to play a dual role in the initiator identity of N-formylmethionyl-tRNA by promoting its recognition by IF2 and preventing the misappropriation of this tRNA by the elongation apparatus. This is Methionyl-tRNA formyltransferase from Pseudomonas aeruginosa (strain LESB58).